Here is a 606-residue protein sequence, read N- to C-terminus: Sodium-independent sulfate anion transporter (606 aa).

Residues 1-51 (MPSSVTALGQARSSGPGMAPSACCCSPAALQRRLPILAWLPSYSLQWLKMD) are Extracellular-facing. A helical transmembrane segment spans residues 52 to 72 (FVAGLSVGLTAIPQALAYAEV). Residue A73 is a topological domain, cytoplasmic. Residues 74–94 (GLPPQYGLYSAFMGCFVYFFL) form a helical membrane-spanning segment. At 95–100 (GTSRDV) the chain is on the extracellular side. The chain crosses the membrane as a helical span at residues 101–117 (TLGPTAIMSLLVSFYTF). The Cytoplasmic segment spans residues 118-119 (HE). The chain crosses the membrane as a helical span at residues 120–140 (PAYAVLLAFLSGCIQLAMGVL). Topologically, residues 141-147 (RLGFLLD) are extracellular. Residues 148–168 (FISYPVIKGFTSAAAVTIGFG) traverse the membrane as a helical segment. The Cytoplasmic portion of the chain corresponds to 169-197 (QIKNLLGLQNIPRPFFLQVYHTFLRIAET). The helical transmembrane segment at 198–218 (RVGDAVLGLVCMLLLLVLKLM) threads the bilayer. The Extracellular portion of the chain corresponds to 219–250 (RDHVPPVHPEMPPGVRLSRGLVWAATTARNAL). A helical transmembrane segment spans residues 251 to 271 (VVSFAALVAYSFEVTGYQPFI). Topologically, residues 272–307 (LTGETAEGLPPVRIPPFSVTTANGTISFTEMVQDMG) are cytoplasmic. Residues 308 to 328 (AGLAVVPLMGLLESIAVAKAF) traverse the membrane as a helical segment. Residues 329–341 (ASQNNYRIDANQE) lie on the Extracellular side of the membrane. A helical membrane pass occupies residues 342–362 (LLAIGLTNMLGSLVSSYPVTG). Over 363 to 374 (SFGRTAVNAQSG) the chain is Cytoplasmic. The chain crosses the membrane as a helical span at residues 375-395 (VCTPAGGLVTGVLVLLSLDYL). The Extracellular portion of the chain corresponds to 396 to 398 (TSL). A helical transmembrane segment spans residues 399 to 419 (FYYIPKSALAAVIIMAVAPLF). Topologically, residues 420-441 (DTKIFRTLWRVKRLDLLPLCVT) are cytoplasmic. A helical transmembrane segment spans residues 442 to 462 (FLLCFWEVQYGILAGALVSLL). Topologically, residues 463–606 (MLLHSAARPE…LDQKVALLKA (144 aa)) are extracellular. In terms of domain architecture, STAS spans 470–584 (RPETKVSEGP…EAEKHLRQEP (115 aa)).

It belongs to the SLC26A/SulP transporter (TC 2.A.53) family. As to expression, detected in all tissues tested with highest expression observed in brain, kidney, HEVEC and placenta and lowest in pancreas, skeletal muscle, liver, lung and heart.

Its subcellular location is the cell membrane. It localises to the lysosome membrane. It is found in the apical cell membrane. The protein localises to the basolateral cell membrane. It catalyses the reaction hydrogencarbonate(in) + chloride(out) = hydrogencarbonate(out) + chloride(in). It carries out the reaction sulfate(in) + H(+)(in) = sulfate(out) + H(+)(out). The catalysed reaction is oxalate(in) + chloride(out) = oxalate(out) + chloride(in). Functionally, sodium-independent anion exchanger mediating bicarbonate, chloride, sulfate and oxalate transport. Exhibits sodium-independent sulfate anion transporter activity that may cooperate with SLC26A2 to mediate DIDS-sensitive sulfate uptake into high endothelial venules endothelial cells (HEVEC). In the kidney, mediates chloride-bicarbonate exchange, facilitating V-ATPase-mediated acid secretion. May function as a chloride channel, playing an important role in moderating chloride homeostasis and neuronal activity in the cerebellum. In Homo sapiens (Human), this protein is Sodium-independent sulfate anion transporter.